Reading from the N-terminus, the 198-residue chain is tRNA (pseudouridine(54)-N(1))-methyltransferase (198 aa).

S-adenosyl-L-methionine-binding residues include L134 and G155.

The protein belongs to the methyltransferase superfamily. TrmY family. In terms of assembly, homodimer.

The protein resides in the cytoplasm. It carries out the reaction pseudouridine(54) in tRNA + S-adenosyl-L-methionine = N(1)-methylpseudouridine(54) in tRNA + S-adenosyl-L-homocysteine + H(+). Its function is as follows. Specifically catalyzes the N1-methylation of pseudouridine at position 54 (Psi54) in tRNAs. The chain is tRNA (pseudouridine(54)-N(1))-methyltransferase from Thermococcus kodakarensis (strain ATCC BAA-918 / JCM 12380 / KOD1) (Pyrococcus kodakaraensis (strain KOD1)).